The sequence spans 79 residues: Small ribosomal subunit protein bS16 (79 aa).

Belongs to the bacterial ribosomal protein bS16 family.

This is Small ribosomal subunit protein bS16 from Buchnera aphidicola subsp. Acyrthosiphon pisum (strain 5A).